The primary structure comprises 300 residues: Merozoite surface protein 2 (300 aa).

An N-terminal signal peptide occupies residues 1–20 (MKVIKTLSIINFFIFVTFNI). N-linked (GlcNAc...) asparagine glycans are attached at residues Asn22 and Asn36. The interval 44–226 (EESKPPTGAV…EQTESPELQS (183 aa)) is polymorphic region. A 1; inverted repeat occupies 51–58 (GAVAGSGA). The 7 X 8 AA tandem repeats of G-S-G-A-G-A-V-A stretch occupies residues 51-110 (GAVAGSGAGAGSGAGAVAGSGAGAVAGSGAGAVAGSGAGAVAGSGAGAVAGSGAVAGSGA). Repeat copies occupy residues 61–68 (GSGAGAVA), 69–76 (GSGAGAVA), 77–84 (GSGAGAVA), 85–92 (GSGAGAVA), and 93–100 (GSGAGAVA). A 7; inverted repeat occupies 103–110 (GAVAGSGA). The segment at 111-261 (GNGANPGADA…DSQKECTDGN (151 aa)) is disordered. Over residues 123-148 (SPSTPATTTTTTTTNDAEASTSTSSE) the composition is skewed to low complexity. The span at 149–165 (NRNHNNAETNPKGKGEV) shows a compositional bias: basic and acidic residues. Composition is skewed to polar residues over residues 167–193 (KPNQ…NVPR) and 200–228 (KSPT…QSAP). N-linked (GlcNAc...) asparagine glycosylation occurs at Asn177. Asn249 carries N-linked (GlcNAc...) asparagine glycosylation. An intrachain disulfide couples Cys257 to Cys265. Residues Asn273 and Asn274 are each glycosylated (N-linked (GlcNAc...) asparagine). Asn274 carries GPI-anchor amidated asparagine lipidation. The propeptide at 275–300 (SSNIASINKFVVLISATLVLSFAIFI) is removed in mature form.

Its subcellular location is the cell membrane. May play a role in the merozoite attachment to the erythrocyte. In Plasmodium falciparum (isolate imr143), this protein is Merozoite surface protein 2.